Consider the following 565-residue polypeptide: Phosphatidylinositol 4-kinase gamma 4 (565 aa).

2 consecutive Ubiquitin-like domains span residues 32 to 104 and 109 to 187; these read IVIF…LVVR and RAIS…RPAK. Residues 257–542 enclose the PI3K/PI4K catalytic domain; it reads GYLPVMSTEG…AILPGTSEET (286 aa). Positions 263-269 are G-loop; the sequence is STEGSGG. ATP-binding positions include 264–270 and Lys286; that span reads TEGSGGV. A disordered region spans residues 291 to 311; that stretch reads EPMAKNNPRGLPLSTDGEGLK. Position 369-372 (369-372) interacts with ATP; sequence QLFV. Residues 402–410 are catalytic loop; it reads ANADRHAGN. Residues 425–451 are activation loop; it reads PIDHGYCLPEKFEDCTFEWLYWPQARE. Asp427 contributes to the ATP binding site.

This sequence belongs to the PI3/PI4-kinase family. Type II PI4K subfamily. In terms of assembly, interacts with FTIP1 and RPN10. In terms of tissue distribution, specifically expressed in the phloem including companion cells.

The protein resides in the nucleus. Its subcellular location is the endoplasmic reticulum. The catalysed reaction is a 1,2-diacyl-sn-glycero-3-phospho-(1D-myo-inositol) + ATP = a 1,2-diacyl-sn-glycero-3-phospho-(1D-myo-inositol 4-phosphate) + ADP + H(+). The phosphorylation of phosphatidylinositol (PI) to PI4P is the first committed step in the generation of phosphatidylinositol 4,5-bisphosphate (PIP2), a precursor of the second messenger inositol 1,4,5-trisphosphate (InsP3). Involved in the control of flowering under long day conditions by promoting degradation of FTIP1. Recruits FTIP1 for degradation by the 26S proteasome in leaves, which affects RFT1 transport to the shoot apical meristem (SAM). This is Phosphatidylinositol 4-kinase gamma 4 from Oryza sativa subsp. japonica (Rice).